The sequence spans 296 residues: MCELKELERELQPRQHLWYFEYYTGNNVGLFMKMNRVIYSGQSDIQRIDIFENPDLGVVFALDGITMTTEKDEFMYHEMLAHVPMFLHPNPKKVLIIGGGDGGTLREVLKHDSVEKAILCEVDGLVIEAARKYLKQTSCGFDDPRAEIVIANGAEYVRKFKNEFDVIIIDSTDPTAGQGGHLFTEEFYQACYDALKEDGVFSAETEDPFYDIGWFKLAYKRISKVFPITKVYLGFMTTYPSGMWSYTFASKGIDPIKDFDPEKVRKFNKELKYYNEEVHVASFALPNFVKKELGLM.

Residues 16–251 (HLWYFEYYTG…GMWSYTFASK (236 aa)) enclose the PABS domain. Gln-46 is an S-methyl-5'-thioadenosine binding site. Spermidine is bound by residues His-77 and Asp-101. S-methyl-5'-thioadenosine is bound by residues Glu-121 and 152 to 153 (NG). Residue Asp-170 is the Proton acceptor of the active site. 170–173 (DSTD) serves as a coordination point for spermidine.

This sequence belongs to the spermidine/spermine synthase family. In terms of assembly, homodimer or homotetramer.

It localises to the cytoplasm. The enzyme catalyses S-adenosyl 3-(methylsulfanyl)propylamine + putrescine = S-methyl-5'-thioadenosine + spermidine + H(+). The protein operates within amine and polyamine biosynthesis; spermidine biosynthesis; spermidine from putrescine: step 1/1. Its function is as follows. Catalyzes the irreversible transfer of a propylamine group from the amino donor S-adenosylmethioninamine (decarboxy-AdoMet) to putrescine (1,4-diaminobutane) to yield spermidine. The protein is Polyamine aminopropyltransferase of Thermotoga neapolitana (strain ATCC 49049 / DSM 4359 / NBRC 107923 / NS-E).